A 90-amino-acid chain; its full sequence is Probable Fe(2+)-trafficking protein (90 aa).

The protein belongs to the Fe(2+)-trafficking protein family. Monomer.

Its function is as follows. Could be a mediator in iron transactions between iron acquisition and iron-requiring processes, such as synthesis and/or repair of Fe-S clusters in biosynthetic enzymes. The sequence is that of Probable Fe(2+)-trafficking protein from Proteus mirabilis (strain HI4320).